The chain runs to 31 residues: MVTLISYISLLAGFVIIASVFYLALVKIKLI.

Residues 4–24 (LISYISLLAGFVIIASVFYLA) traverse the membrane as a helical segment.

Belongs to the PetL family. In terms of assembly, the 4 large subunits of the cytochrome b6-f complex are cytochrome b6, subunit IV (17 kDa polypeptide, PetD), cytochrome f and the Rieske protein, while the 4 small subunits are PetG, PetL, PetM and PetN. The complex functions as a dimer.

Its subcellular location is the plastid. The protein resides in the chloroplast thylakoid membrane. Functionally, component of the cytochrome b6-f complex, which mediates electron transfer between photosystem II (PSII) and photosystem I (PSI), cyclic electron flow around PSI, and state transitions. PetL is important for photoautotrophic growth as well as for electron transfer efficiency and stability of the cytochrome b6-f complex. This Tupiella akineta (Green alga) protein is Cytochrome b6-f complex subunit 6.